The sequence spans 104 residues: Urease subunit gamma (104 aa).

Belongs to the urease gamma subunit family. In terms of assembly, heterotrimer of UreA (gamma), UreB (beta) and UreC (alpha) subunits. Three heterotrimers associate to form the active enzyme.

The protein localises to the cytoplasm. It catalyses the reaction urea + 2 H2O + H(+) = hydrogencarbonate + 2 NH4(+). It participates in nitrogen metabolism; urea degradation; CO(2) and NH(3) from urea (urease route): step 1/1. The sequence is that of Urease subunit gamma from Actinomyces naeslundii.